The chain runs to 546 residues: Transmembrane anterior posterior transformation protein 1 homolog (546 aa).

The disordered stretch occupies residues 1–37 (MADAAMSGEEKEEDGGKRTTAATPAETLGFYEPSDGS). The next 6 helical transmembrane spans lie at 92–112 (LMVFGFFLCLDAFLYVFTLLP), 149–169 (ILVICYFIMHYVDYSMMYHLI), 219–239 (VIPHFFMAVLYVILHAILILV), 316–336 (LWVLFPDVCMVIASEIAVDVV), 384–404 (GFIPLPLAVLLIRVVTSSVKV), and 413–433 (VVLFYFGLITLKVLNSIVLLG). A disordered region spans residues 449–529 (FQPPTCQPGK…NSELKQKQAD (81 aa)). The segment covering 478-505 (TANTSVTSQPTKAASTAQLLVESNSDKL) has biased composition (polar residues). Residues 514 to 529 (KDISGDNSELKQKQAD) are compositionally biased toward basic and acidic residues.

The protein belongs to the TAPT1 family.

Its subcellular location is the cytoplasm. The protein localises to the cytoskeleton. It localises to the microtubule organizing center. The protein resides in the centrosome. It is found in the cilium basal body. Its subcellular location is the membrane. Its function is as follows. Plays a role in primary cilia formation. Involved in cartilage and bone development. May play a role in the differentiation of cranial neural crest cells. May act as a downstream effector of hoxc8 during development. The chain is Transmembrane anterior posterior transformation protein 1 homolog (tapt1) from Xenopus laevis (African clawed frog).